The primary structure comprises 430 residues: FAD-dependent monooxygenase asL4 (430 aa).

Residues Gly-11–Ala-14, Glu-33–Arg-34, Arg-108, and Tyr-278 contribute to the FAD site.

This sequence belongs to the aromatic-ring hydroxylase family. It depends on FAD as a cofactor.

The protein operates within secondary metabolite biosynthesis; terpenoid biosynthesis. Flavin-dependent monooxygenase; part of the gene cluster that mediates the biosynthesis of xenovulene A, an unusual meroterpenoid that has potent inhibitory effects on the human gamma-aminobutyrate A (GABAA) benzodiazepine receptor. The first step of xenovulene A biosynthesis is the biosynthesis of 3-methylorcinaldehyde performed by the non-reducing polyketide synthase aspks1. The salicylate hydroxylase asL1 then catalyzes the oxidative dearomatization of 3-methylorcinaldehyde to yield a dearomatized hydroxycyclohexadione. The 2-oxoglutarate-dependent dioxygenase asL3 further catalyzes the oxidative ring expansion to provide the first tropolone metabolite. The cytochrome P450 monooxygenase asR2 allows the synthesis of tropolone hemiacetal. In parallel, a previously unrecognised class of terpene cyclase, asR6, produces alpha-humulene from farnesylpyrophosphate (FPP). The putative Diels-Alderase asR5 probably catalyzes the formation of the tropolone-humulene skeleton by linking humulene and the polyketide moiety. Oxidative-ring contractions catalyzed by asL4 and asL6 then processively remove carbon atoms from the polyketide to yield xenovulene A. The sequence is that of FAD-dependent monooxygenase asL4 from Sarocladium schorii (Acremonium strictum (strain IMI 501407)).